The following is a 64-amino-acid chain: Large ribosomal subunit protein uL29 (64 aa).

This sequence belongs to the universal ribosomal protein uL29 family.

In Methanothermobacter thermautotrophicus (strain ATCC 29096 / DSM 1053 / JCM 10044 / NBRC 100330 / Delta H) (Methanobacterium thermoautotrophicum), this protein is Large ribosomal subunit protein uL29 (rpl29).